The chain runs to 482 residues: 2-succinylbenzoate--CoA ligase (482 aa).

This sequence belongs to the ATP-dependent AMP-binding enzyme family. MenE subfamily.

The catalysed reaction is 2-succinylbenzoate + ATP + CoA = 2-succinylbenzoyl-CoA + AMP + diphosphate. It participates in quinol/quinone metabolism; 1,4-dihydroxy-2-naphthoate biosynthesis; 1,4-dihydroxy-2-naphthoate from chorismate: step 5/7. It functions in the pathway quinol/quinone metabolism; menaquinone biosynthesis. Functionally, converts 2-succinylbenzoate (OSB) to 2-succinylbenzoyl-CoA (OSB-CoA). This chain is 2-succinylbenzoate--CoA ligase, found in Bacillus anthracis (strain A0248).